A 242-amino-acid chain; its full sequence is Floral homeotic protein AGAMOUS (242 aa).

The MADS-box domain occupies 19–73; that stretch reads RGKIEIKRIENTTNRQVTFCKRRNGLLKKAYELSVLCDAEVALIVFSTRGRLYEY. The 91-residue stretch at 103–193 folds into the K-box domain; it reads AQFYQQEASK…RAKIAENERA (91 aa).

As to expression, flower. Preferentially expressed in stamen and carpel and weakly in petal. Undetected in leaves and roots.

It is found in the nucleus. Functionally, probable transcription factor involved in regulating genes that determines stamen and carpel development in wild-type flowers. The sequence is that of Floral homeotic protein AGAMOUS (AG2) from Panax ginseng (Korean ginseng).